The chain runs to 349 residues: Holliday junction branch migration complex subunit RuvB (349 aa).

The segment at 1 to 183 (MTDPSRLVTP…FGIPIRLNFY (183 aa)) is large ATPase domain (RuvB-L). Residues leucine 22, arginine 23, glycine 64, lysine 67, threonine 68, threonine 69, 130-132 (EDF), arginine 173, tyrosine 183, and arginine 220 each bind ATP. Residue threonine 68 participates in Mg(2+) binding. A small ATPAse domain (RuvB-S) region spans residues 184–254 (TIEELESIVT…IADHALGALE (71 aa)). The interval 257–349 (SAGLDAMDRR…GLFGDTGDQE (93 aa)) is head domain (RuvB-H). Residues arginine 293, arginine 312, and arginine 317 each contribute to the DNA site.

This sequence belongs to the RuvB family. As to quaternary structure, homohexamer. Forms an RuvA(8)-RuvB(12)-Holliday junction (HJ) complex. HJ DNA is sandwiched between 2 RuvA tetramers; dsDNA enters through RuvA and exits via RuvB. An RuvB hexamer assembles on each DNA strand where it exits the tetramer. Each RuvB hexamer is contacted by two RuvA subunits (via domain III) on 2 adjacent RuvB subunits; this complex drives branch migration. In the full resolvosome a probable DNA-RuvA(4)-RuvB(12)-RuvC(2) complex forms which resolves the HJ.

The protein resides in the cytoplasm. It catalyses the reaction ATP + H2O = ADP + phosphate + H(+). The RuvA-RuvB-RuvC complex processes Holliday junction (HJ) DNA during genetic recombination and DNA repair, while the RuvA-RuvB complex plays an important role in the rescue of blocked DNA replication forks via replication fork reversal (RFR). RuvA specifically binds to HJ cruciform DNA, conferring on it an open structure. The RuvB hexamer acts as an ATP-dependent pump, pulling dsDNA into and through the RuvAB complex. RuvB forms 2 homohexamers on either side of HJ DNA bound by 1 or 2 RuvA tetramers; 4 subunits per hexamer contact DNA at a time. Coordinated motions by a converter formed by DNA-disengaged RuvB subunits stimulates ATP hydrolysis and nucleotide exchange. Immobilization of the converter enables RuvB to convert the ATP-contained energy into a lever motion, pulling 2 nucleotides of DNA out of the RuvA tetramer per ATP hydrolyzed, thus driving DNA branch migration. The RuvB motors rotate together with the DNA substrate, which together with the progressing nucleotide cycle form the mechanistic basis for DNA recombination by continuous HJ branch migration. Branch migration allows RuvC to scan DNA until it finds its consensus sequence, where it cleaves and resolves cruciform DNA. This Rhodopseudomonas palustris (strain TIE-1) protein is Holliday junction branch migration complex subunit RuvB.